The primary structure comprises 298 residues: Lipoyl synthase (298 aa).

Residues Cys40, Cys45, Cys51, Cys67, Cys71, Cys74, and Ser280 each contribute to the [4Fe-4S] cluster site. A Radical SAM core domain is found at 53–269 (AVRRTATFMI…KEIAMAKGFS (217 aa)).

It belongs to the radical SAM superfamily. Lipoyl synthase family. It depends on [4Fe-4S] cluster as a cofactor.

It localises to the cytoplasm. It catalyses the reaction [[Fe-S] cluster scaffold protein carrying a second [4Fe-4S](2+) cluster] + N(6)-octanoyl-L-lysyl-[protein] + 2 oxidized [2Fe-2S]-[ferredoxin] + 2 S-adenosyl-L-methionine + 4 H(+) = [[Fe-S] cluster scaffold protein] + N(6)-[(R)-dihydrolipoyl]-L-lysyl-[protein] + 4 Fe(3+) + 2 hydrogen sulfide + 2 5'-deoxyadenosine + 2 L-methionine + 2 reduced [2Fe-2S]-[ferredoxin]. It functions in the pathway protein modification; protein lipoylation via endogenous pathway; protein N(6)-(lipoyl)lysine from octanoyl-[acyl-carrier-protein]. In terms of biological role, catalyzes the radical-mediated insertion of two sulfur atoms into the C-6 and C-8 positions of the octanoyl moiety bound to the lipoyl domains of lipoate-dependent enzymes, thereby converting the octanoylated domains into lipoylated derivatives. This Bacillus pumilus (strain SAFR-032) protein is Lipoyl synthase.